The sequence spans 217 residues: MAETSNSENKTSEEAKASEKNSRSITLEETKLENMNSEESTQTTESTQAQAAEAADSELSLQSELDAAKKEVESLKDSWARERAEFQNFKRRSAQEFVSIRKEAVKSLVSGFLNPIDNLERVGATQSPSEELKPFVEGVAMILKEFYAVLEKSNVIRFDPKGESFDPMSMEALSSEEGDQYSEETVIDVYQAGYYYKENEDKFTLRPARVRIGKPKS.

The tract at residues M1–S63 is disordered. A compositionally biased stretch (basic and acidic residues) spans K10 to L32. A compositionally biased stretch (low complexity) spans S37–S63.

It belongs to the GrpE family. Homodimer.

The protein resides in the cytoplasm. Participates actively in the response to hyperosmotic and heat shock by preventing the aggregation of stress-denatured proteins, in association with DnaK and GrpE. It is the nucleotide exchange factor for DnaK and may function as a thermosensor. Unfolded proteins bind initially to DnaJ; upon interaction with the DnaJ-bound protein, DnaK hydrolyzes its bound ATP, resulting in the formation of a stable complex. GrpE releases ADP from DnaK; ATP binding to DnaK triggers the release of the substrate protein, thus completing the reaction cycle. Several rounds of ATP-dependent interactions between DnaJ, DnaK and GrpE are required for fully efficient folding. The chain is Protein GrpE from Leptospira borgpetersenii serovar Hardjo-bovis (strain JB197).